The sequence spans 876 residues: DDB1- and CUL4-associated factor 6 (876 aa).

WD repeat units lie at residues 49–88 (VHDG…VLTT), 92–133 (GHRA…ETNR), 139–179 (CHYG…SCTK), 189–229 (NCRR…TRAT), and 251–290 (NKSC…AREL). Composition is skewed to basic and acidic residues over residues 288–303 (RELK…EELR) and 312–334 (LRGD…RDGE). 5 disordered regions span residues 288–340 (RELK…PNVS), 355–391 (EASE…SSPN), 408–485 (LQPS…TEGT), 498–645 (WSST…NPEL), and 658–691 (EDPS…GPGD). Ser-336 bears the Phosphoserine mark. 2 stretches are compositionally biased toward polar residues: residues 375–391 (TNQP…SSPN) and 409–422 (QPST…QAQA). Residues 456–466 (HQSDNSNERLS) are compositionally biased toward basic and acidic residues. Over residues 499 to 510 (SSTASSSRGNGS) the composition is skewed to low complexity. Residues 534–544 (SETRAPEELSE) are compositionally biased toward basic and acidic residues. Composition is skewed to polar residues over residues 550–562 (ENLT…TAQL), 571–584 (DSNS…SQDS), 603–613 (EQASTESATRH), and 621–645 (PSQT…NPEL). At Ser-665 the chain carries Phosphoserine. A Phosphothreonine modification is found at Thr-670. Position 673 is a phosphoserine (Ser-673). The IQ domain maps to 692-721 (RRSAVARIQEFFRRRKERKEMEELDTLNIR). WD repeat units lie at residues 734–772 (NSRT…HLML) and 775–814 (ADNH…RIFN). Residues Ser-863 and Ser-866 each carry the phosphoserine modification.

In terms of assembly, interacts with the nuclear receptors NR3C1 and AR in the presence of ligand. Interacts with DDB1, CUL4A and CUL4B.

It localises to the nucleus. It participates in protein modification; protein ubiquitination. Its function is as follows. Ligand-dependent coactivator of nuclear receptors. Enhance transcriptional activity of the nuclear receptors NR3C1 and AR. May function as a substrate receptor for CUL4-DDB1 E3 ubiquitin-protein ligase complex. The protein is DDB1- and CUL4-associated factor 6 (Dcaf6) of Mus musculus (Mouse).